The sequence spans 343 residues: Protein FAM50A-B (343 aa).

Disordered stretches follow at residues M1–R25 and E125–N181. The segment covering E125 to Y142 has biased composition (acidic residues). A compositionally biased stretch (basic and acidic residues) spans P172–N181.

Belongs to the FAM50 family.

It is found in the nucleus. Probably involved in the regulation of pre-mRNA splicing. The polypeptide is Protein FAM50A-B (fam50a-b) (Xenopus laevis (African clawed frog)).